A 368-amino-acid chain; its full sequence is Alkaline phosphatase L (368 aa).

The first 23 residues, 1–23 (MFKRSLIAASLSVAALVSAQAMA), serve as a signal peptide directing secretion.

It belongs to the PstS family. Homodimer.

It localises to the secreted. It is found in the periplasm. It carries out the reaction a phosphate monoester + H2O = an alcohol + phosphate. Functionally, has both a phosphomonoesterase and phosphodiesterase activity. In Pseudomonas aeruginosa (strain ATCC 15692 / DSM 22644 / CIP 104116 / JCM 14847 / LMG 12228 / 1C / PRS 101 / PAO1), this protein is Alkaline phosphatase L.